A 235-amino-acid polypeptide reads, in one-letter code: Mediator of RNA polymerase II transcription subunit 29 (235 aa).

Low complexity predominate over residues 1–14 (MMNQMGMMMQQQGV). The segment at 1–54 (MMNQMGMMMQQQGVGVPGGPGGVGGVGMPGPGGVGVAPGMMQSPQMQQAQQQQV) is disordered. A compositionally biased stretch (gly residues) spans 15-36 (GVPGGPGGVGGVGMPGPGGVGV). Residues 37–54 (APGMMQSPQMQQAQQQQV) show a composition bias toward low complexity.

The protein belongs to the Mediator complex subunit 29 family. As to quaternary structure, component of the Mediator complex.

Its subcellular location is the nucleus. Functionally, component of the Mediator complex, a coactivator involved in the regulated transcription of nearly all RNA polymerase II-dependent genes. Mediator functions as a bridge to convey information from gene-specific regulatory proteins to the basal RNA polymerase II transcription machinery. Mediator is recruited to promoters by direct interactions with regulatory proteins and serves as a scaffold for the assembly of a functional preinitiation complex with RNA polymerase II and the general transcription factors. The protein is Mediator of RNA polymerase II transcription subunit 29 (ix) of Anopheles gambiae (African malaria mosquito).